Here is a 149-residue protein sequence, read N- to C-terminus: Calmodulin-1 (149 aa).

Ala-2 carries the N-acetylalanine modification. EF-hand domains are found at residues 8–43 (EQIAEFKEAFSLFDKDGDGTITTKELGTVMRSLGQN), 44–79 (PTEAELQDMINEVDADGNGTIDFPEFLTMMARKMKD), 81–116 (DSEEEIREAFRVFDKDGNGFISAAELRHVMTNLGEK), and 117–149 (LTDEEVDEMIREADIDGDGQVNYEEFVTMMTSK). Ca(2+) is bound by residues Asp-21, Asp-23, Asp-25, Thr-27, Glu-32, Asp-57, Asp-59, Asn-61, Thr-63, Glu-68, Asp-94, Asp-96, Asn-98, and Glu-105. Lys-116 is subject to N6,N6,N6-trimethyllysine. Asp-130, Asp-132, Asp-134, Gln-136, and Glu-141 together coordinate Ca(2+).

The protein belongs to the calmodulin family.

Its function is as follows. Calmodulin mediates the control of a large number of enzymes, ion channels and other proteins by Ca(2+). Among the enzymes to be stimulated by the calmodulin-Ca(2+) complex are a number of protein kinases and phosphatases. The polypeptide is Calmodulin-1 (Branchiostoma floridae (Florida lancelet)).